The chain runs to 154 residues: CASP-like protein 5B3 (154 aa).

The Cytoplasmic portion of the chain corresponds to Met1–Arg17. Residues Val18–Ser38 traverse the membrane as a helical segment. Asn39 is a glycosylation site (N-linked (GlcNAc...) asparagine). The Extracellular portion of the chain corresponds to Asn39–Ala42. The helical transmembrane segment at Phe43 to Leu63 threads the bilayer. Residues Asp64–Pro77 lie on the Cytoplasmic side of the membrane. A helical membrane pass occupies residues Val78–Ala98. Residues Ser99 to Ser129 are Extracellular-facing. The helical transmembrane segment at Val130 to Leu150 threads the bilayer. Over Leu151–Leu154 the chain is Cytoplasmic.

The protein belongs to the Casparian strip membrane proteins (CASP) family. As to quaternary structure, homodimer and heterodimers.

The protein resides in the cell membrane. The protein is CASP-like protein 5B3 of Oryza sativa subsp. indica (Rice).